We begin with the raw amino-acid sequence, 136 residues long: Large ribosomal subunit protein bL17 (136 aa).

It belongs to the bacterial ribosomal protein bL17 family. In terms of assembly, part of the 50S ribosomal subunit. Contacts protein L32.

The protein is Large ribosomal subunit protein bL17 of Rhodopseudomonas palustris (strain BisB5).